The primary structure comprises 187 residues: Large ribosomal subunit protein uL13 (187 aa).

Belongs to the universal ribosomal protein uL13 family.

The sequence is that of Large ribosomal subunit protein uL13 (rpl13a) from Dictyostelium discoideum (Social amoeba).